Here is a 534-residue protein sequence, read N- to C-terminus: NAD(P)H-quinone oxidoreductase chain 4 2 (534 aa).

Helical transmembrane passes span 9–29 (FPWL…IPLI), 51–71 (WFAL…FYVG), 106–126 (LILL…PVTL), 130–150 (LFYF…AVQD), 152–172 (LLFF…LSIW), 184–204 (FILY…AMAF), 227–247 (LLMY…FPLH), 258–278 (TAPV…YALM), 290–310 (LYFA…AALT), 326–346 (ISHM…GMSG), 347–367 (AMLQ…LVGA), 399–419 (LASL…VFIG), 432–452 (LVVV…LLSM), and 479–499 (VFII…PKLV).

It belongs to the complex I subunit 4 family.

It localises to the cellular thylakoid membrane. It catalyses the reaction a plastoquinone + NADH + (n+1) H(+)(in) = a plastoquinol + NAD(+) + n H(+)(out). The catalysed reaction is a plastoquinone + NADPH + (n+1) H(+)(in) = a plastoquinol + NADP(+) + n H(+)(out). NDH-1 shuttles electrons from NAD(P)H, via FMN and iron-sulfur (Fe-S) centers, to quinones in the respiratory chain. The immediate electron acceptor for the enzyme in this species is believed to be plastoquinone. Couples the redox reaction to proton translocation (for every two electrons transferred, four hydrogen ions are translocated across the cytoplasmic membrane), and thus conserves the redox energy in a proton gradient. The polypeptide is NAD(P)H-quinone oxidoreductase chain 4 2 (Synechococcus sp. (strain JA-2-3B'a(2-13)) (Cyanobacteria bacterium Yellowstone B-Prime)).